Reading from the N-terminus, the 183-residue chain is Holliday junction branch migration complex subunit RuvA (183 aa).

The tract at residues 1–64 (MVVGIEGIIT…EDSNKFYGFL (64 aa)) is domain I. The segment at 65–139 (DKDEQKMFEM…DTKTKLENVS (75 aa)) is domain II. A region of interest (flexible linker) is located at residue serine 139. The tract at residues 139–183 (SDDKSEALAALLTLGFKQEKIISVLASAQATGTSELIKEALKKLG) is domain III.

The protein belongs to the RuvA family. As to quaternary structure, homotetramer. Forms an RuvA(8)-RuvB(12)-Holliday junction (HJ) complex. HJ DNA is sandwiched between 2 RuvA tetramers; dsDNA enters through RuvA and exits via RuvB. An RuvB hexamer assembles on each DNA strand where it exits the tetramer. Each RuvB hexamer is contacted by two RuvA subunits (via domain III) on 2 adjacent RuvB subunits; this complex drives branch migration. In the full resolvosome a probable DNA-RuvA(4)-RuvB(12)-RuvC(2) complex forms which resolves the HJ.

It is found in the cytoplasm. Functionally, the RuvA-RuvB-RuvC complex processes Holliday junction (HJ) DNA during genetic recombination and DNA repair, while the RuvA-RuvB complex plays an important role in the rescue of blocked DNA replication forks via replication fork reversal (RFR). RuvA specifically binds to HJ cruciform DNA, conferring on it an open structure. The RuvB hexamer acts as an ATP-dependent pump, pulling dsDNA into and through the RuvAB complex. HJ branch migration allows RuvC to scan DNA until it finds its consensus sequence, where it cleaves and resolves the cruciform DNA. This is Holliday junction branch migration complex subunit RuvA from Campylobacter jejuni subsp. jejuni serotype O:23/36 (strain 81-176).